The primary structure comprises 151 residues: Ribosome maturation factor RimP (151 aa).

It belongs to the RimP family.

The protein resides in the cytoplasm. Required for maturation of 30S ribosomal subunits. The protein is Ribosome maturation factor RimP of Shewanella sp. (strain ANA-3).